A 156-amino-acid polypeptide reads, in one-letter code: Persephin (156 aa).

Residues 1–21 form the signal peptide; that stretch reads MAAGRLRILFLLLLSLHLGLG. Intrachain disulfides connect cysteine 66–cysteine 124, cysteine 93–cysteine 152, and cysteine 97–cysteine 154.

Belongs to the TGF-beta family. GDNF subfamily. Homodimer; disulfide-linked. Interacts with GFRA4 coreceptor and RET: forms a 2:2:2 ternary complex composed of PSPN ligand, GFRA4 and RET receptor. As to expression, expressed at low levels in substantia nigra. Cochlea.

The protein resides in the secreted. In terms of biological role, growth factor that exhibits neurotrophic activity on mesencephalic dopaminergic and motor neurons. Acts by binding to its coreceptor, GFRA4, leading to autophosphorylation and activation of the RET receptor. The polypeptide is Persephin (Rattus norvegicus (Rat)).